The primary structure comprises 532 residues: Copalyl diphosphate synthase (532 aa).

The short motif at 313-318 (DTDDTA) is the DXDDTA motif element. Positions 443 to 449 (QSDDGSW) match the QXXDGSW motif motif.

It belongs to the terpene synthase family. The cofactor is Mg(2+).

It catalyses the reaction (2E,6E,10E)-geranylgeranyl diphosphate = (+)-copalyl diphosphate. Functionally, involved in the biosynthesis of the mercapturic acid derivative diterpene cyslabdan A, a potentiator of the beta-lactam antibiotic imipenem. Catalyzes the conversion of geranylgeranyl diphosphate (GGDP) into (+)-copalyl diphosphate. The sequence is that of Copalyl diphosphate synthase from Streptomyces cyslabdanicus.